Reading from the N-terminus, the 157-residue chain is Endoribonuclease YbeY (157 aa).

Residues His-111, His-115, and His-121 each coordinate Zn(2+). Residues 136–157 (ELLAELGHPDPYADDETDSITH) are disordered. Over residues 147–157 (YADDETDSITH) the composition is skewed to acidic residues.

It belongs to the endoribonuclease YbeY family. Requires Zn(2+) as cofactor.

Its subcellular location is the cytoplasm. Its function is as follows. Single strand-specific metallo-endoribonuclease involved in late-stage 70S ribosome quality control and in maturation of the 3' terminus of the 16S rRNA. The sequence is that of Endoribonuclease YbeY from Pseudomonas putida (strain ATCC 700007 / DSM 6899 / JCM 31910 / BCRC 17059 / LMG 24140 / F1).